Reading from the N-terminus, the 312-residue chain is MKVTLLGASGGIGQPLSLLLKLHLPAESDLSLYDVAPVTPGVAKDISHIPTSVEVEGFGGDDPSEALKGADIVLICAGVARKPGMTRADLFNVNAGIIQNLVEKVAQVCPQACVCIITNPVNSIIPIAAEVLKKAGVYDKRKLFGITTLDTIRSEKFIVQAKNIEINRNDISVIGGHSGVTILPLLSQIPHVEFTEQELKDLTHRIQNAGTEVVEAKAGAGSATLSMAYAAMRFVVSMARALNGEVITECAYIEGDGKFARFFAQPVRLGKNGVEEILPLGTLSAFEQQALEAMLPTLQTDIDNGVKFVTGE.

Residues 7–13 (GASGGIG) and D34 contribute to the NAD(+) site. Substrate is bound by residues R81 and R87. Residues N94 and 117–119 (ITN) each bind NAD(+). Substrate-binding residues include N119 and R153. Residue H177 is the Proton acceptor of the active site. M227 contacts NAD(+).

Belongs to the LDH/MDH superfamily. MDH type 1 family. Homodimer.

It carries out the reaction (S)-malate + NAD(+) = oxaloacetate + NADH + H(+). In terms of biological role, catalyzes the reversible oxidation of malate to oxaloacetate. The polypeptide is Malate dehydrogenase (Actinobacillus succinogenes (strain ATCC 55618 / DSM 22257 / CCUG 43843 / 130Z)).